A 221-amino-acid chain; its full sequence is Small ribosomal subunit protein uS2 (221 aa).

The interval 202-221 is disordered; that stretch reads KVKMPQQNQRGRPQRRFQRR.

It belongs to the universal ribosomal protein uS2 family.

In Methanococcus vannielii (strain ATCC 35089 / DSM 1224 / JCM 13029 / OCM 148 / SB), this protein is Small ribosomal subunit protein uS2.